The chain runs to 456 residues: Transcription factor tau subunit sfc1 (456 aa).

Disordered stretches follow at residues 394-416 (DRYS…GLNT) and 437-456 (HEGF…IFGD). The span at 407-416 (LNDTVRGLNT) shows a compositional bias: polar residues. The span at 441-456 (EDLEEIDDDYDDIFGD) shows a compositional bias: acidic residues.

Component of the TFIIIC complex including sfc1, sfc3, sfc4, sfc6 and sfc7. The subunits are organized in two globular domains, tauA and tauB, connected by a proteolysis-sensitive and flexible linker. Interacts with sfc3, sfc4 and sfc6. Phosphorylated.

The protein localises to the nucleus. In terms of biological role, TFIIIC mediates tRNA and 5S RNA gene activation by binding to intragenic promoter elements. Upstream of the transcription start site, TFIIIC assembles the initiation complex TFIIIB-TFIIIC-tDNA, which is sufficient for RNA polymerase III recruitment and function. Part of the tauA domain of TFIIIC that binds boxA DNA promoter sites of tRNA and similar genes. Participates in the interconnection of tauA with tauB via its contacts with sfc3 and sfc6. Serves as a scaffold critical for tauA-DNA spatial configuration and tauB-DNA stability. Localizes to chromatin insulator sequence without recruiting RNA polymerase III and plays a role in nuclear organization. The chain is Transcription factor tau subunit sfc1 (sfc1) from Schizosaccharomyces pombe (strain 972 / ATCC 24843) (Fission yeast).